Consider the following 305-residue polypeptide: Peroxidase A2 (305 aa).

The residue at position 1 (Gln1) is a Pyrrolidone carboxylic acid. Residues Asn3 and Asn13 are each glycosylated (N-linked (GlcNAc...) asparagine). Intrachain disulfides connect Cys11-Cys91, Cys44-Cys49, Cys97-Cys299, and Cys176-Cys208. His42 functions as the Proton acceptor in the catalytic mechanism. Ca(2+) contacts are provided by Asp43, Val46, Gly48, Asp50, and Ser52. Substrate is bound at residue Pro139. N-linked (GlcNAc...) asparagine glycosylation is present at Asn147. Residue His169 participates in heme b binding. Thr170 serves as a coordination point for Ca(2+). N-linked (GlcNAc...) asparagine glycosylation is found at Asn185, Asn197, and Asn211. 3 residues coordinate Ca(2+): Asp221, Thr224, and Asp229. N-linked (GlcNAc...) asparagine glycosylation is present at Asn267.

The protein belongs to the peroxidase family. Classical plant (class III) peroxidase subfamily. Ca(2+) serves as cofactor. The cofactor is heme b.

It carries out the reaction 2 a phenolic donor + H2O2 = 2 a phenolic radical donor + 2 H2O. Removal of H(2)O(2), oxidation of toxic reductants, biosynthesis and degradation of lignin, suberization, auxin catabolism, response to environmental stresses such as wounding, pathogen attack and oxidative stress. These functions might be dependent on each isozyme/isoform in each plant tissue. This Armoracia rusticana (Horseradish) protein is Peroxidase A2 (HRPA2).